The sequence spans 331 residues: UPF0194 membrane protein YbhG (331 aa).

The signal sequence occupies residues 1 to 15; sequence MKKPVVIGLAVVVLA. Residues 107–208 adopt a coiled-coil conformation; it reads EEIAQAAAAV…LNLQDSTLIA (102 aa).

The protein belongs to the UPF0194 family.

The protein localises to the periplasm. This is UPF0194 membrane protein YbhG from Escherichia coli O157:H7 (strain EC4115 / EHEC).